Here is a 101-residue protein sequence, read N- to C-terminus: Putative UPF0377 protein YBL108W (101 aa).

The protein belongs to the UPF0377 family.

The protein is Putative UPF0377 protein YBL108W of Saccharomyces cerevisiae (strain ATCC 204508 / S288c) (Baker's yeast).